The sequence spans 642 residues: Threonine--tRNA ligase (642 aa).

The region spanning 1 to 61 (MPVITLPDGS…SEDANLVIFT (61 aa)) is the TGS domain. A catalytic region spans residues 243 to 534 (DHRKLAKKFD…LIEHYEGSFP (292 aa)). Zn(2+) contacts are provided by Cys-334, His-385, and His-511.

Belongs to the class-II aminoacyl-tRNA synthetase family. Homodimer. The cofactor is Zn(2+).

It localises to the cytoplasm. It catalyses the reaction tRNA(Thr) + L-threonine + ATP = L-threonyl-tRNA(Thr) + AMP + diphosphate + H(+). In terms of biological role, catalyzes the attachment of threonine to tRNA(Thr) in a two-step reaction: L-threonine is first activated by ATP to form Thr-AMP and then transferred to the acceptor end of tRNA(Thr). Also edits incorrectly charged L-seryl-tRNA(Thr). The sequence is that of Threonine--tRNA ligase from Cellvibrio japonicus (strain Ueda107) (Pseudomonas fluorescens subsp. cellulosa).